We begin with the raw amino-acid sequence, 145 residues long: D-aminoacyl-tRNA deacylase (145 aa).

The Gly-cisPro motif, important for rejection of L-amino acids motif lies at 137–138 (GP).

The protein belongs to the DTD family. Homodimer.

The protein localises to the cytoplasm. The catalysed reaction is glycyl-tRNA(Ala) + H2O = tRNA(Ala) + glycine + H(+). It catalyses the reaction a D-aminoacyl-tRNA + H2O = a tRNA + a D-alpha-amino acid + H(+). In terms of biological role, an aminoacyl-tRNA editing enzyme that deacylates mischarged D-aminoacyl-tRNAs. Also deacylates mischarged glycyl-tRNA(Ala), protecting cells against glycine mischarging by AlaRS. Acts via tRNA-based rather than protein-based catalysis; rejects L-amino acids rather than detecting D-amino acids in the active site. By recycling D-aminoacyl-tRNA to D-amino acids and free tRNA molecules, this enzyme counteracts the toxicity associated with the formation of D-aminoacyl-tRNA entities in vivo and helps enforce protein L-homochirality. The chain is D-aminoacyl-tRNA deacylase from Shewanella sediminis (strain HAW-EB3).